Consider the following 58-residue polypeptide: Small ribosomal subunit protein bS21 (58 aa).

This sequence belongs to the bacterial ribosomal protein bS21 family.

In Prochlorococcus marinus (strain MIT 9515), this protein is Small ribosomal subunit protein bS21.